We begin with the raw amino-acid sequence, 204 residues long: LexA repressor (204 aa).

The segment at residues 28 to 48 (RAEIAQELGFKSPNAAEEHLK) is a DNA-binding region (H-T-H motif). Active-site for autocatalytic cleavage activity residues include Ser-125 and Lys-162.

This sequence belongs to the peptidase S24 family. Homodimer.

It carries out the reaction Hydrolysis of Ala-|-Gly bond in repressor LexA.. In terms of biological role, represses a number of genes involved in the response to DNA damage (SOS response), including recA and lexA. In the presence of single-stranded DNA, RecA interacts with LexA causing an autocatalytic cleavage which disrupts the DNA-binding part of LexA, leading to derepression of the SOS regulon and eventually DNA repair. The polypeptide is LexA repressor (Pseudomonas aeruginosa (strain LESB58)).